We begin with the raw amino-acid sequence, 384 residues long: MSQQHTLPVTLPPALRQELLGTLSPPAAAQQEQRKQPTPLPTACQKVGSELPGEVPSKHEEKGTDPVKGVLEQECGQQEPELHLGKQQDVHLMKRQDPQEPELHLGKQPEPEGPEPHLGKEQQHQESQDPELHLGKQQQQESQEQELYPGKQQEPQDPELHLGKQQQQESQEQGLCLIKQREPQESQEQRLHLGKEQESQEQRLHLGEEQASQEQRLHLGEEQASQEQRLHLGEEQASPEQRLQLLPQGPQEQELHLGKQQQQQESQQHQEQHEEHQKAEDLGQQHRQEKAQREQQLEEQLDEGKKLLDQQLDQEAVKRHEQLQRDEQFGMKKEQLLEPPGQQKGQLEKPVFVPVPGQVQDIQPAQTAKGEALLLPEQPQEPEV.

The disordered stretch occupies residues 1 to 384 (MSQQHTLPVT…LPEQPQEPEV (384 aa)). 2 stretches are compositionally biased toward basic and acidic residues: residues 56 to 65 (PSKHEEKGTD) and 80 to 134 (PELH…ELHL). Over residues 137–146 (QQQQESQEQE) the composition is skewed to low complexity. Residues 179–208 (KQREPQESQEQRLHLGKEQESQEQRLHLGE) show a composition bias toward basic and acidic residues. A compositionally biased stretch (low complexity) spans 239-267 (PEQRLQLLPQGPQEQELHLGKQQQQQESQ). Composition is skewed to basic and acidic residues over residues 268–308 (QHQE…KKLL) and 315–336 (EAVKRHEQLQRDEQFGMKKEQL).

Belongs to the involucrin family. As to quaternary structure, directly or indirectly cross-linked to cornifelin (CNFN). In terms of processing, substrate of transglutaminase. Specific glutamines or lysines are cross-linked to keratins, desmoplakin and to inter involucrin molecules. In terms of tissue distribution, keratinocytes of epidermis and other stratified squamous epithelia.

Its subcellular location is the cytoplasm. Its function is as follows. Part of the insoluble cornified cell envelope (CE) of stratified squamous epithelia. The sequence is that of Involucrin (IVL) from Otolemur crassicaudatus (Brown greater galago).